A 478-amino-acid chain; its full sequence is V-type ATP synthase beta chain (478 aa).

This sequence belongs to the ATPase alpha/beta chains family.

Its function is as follows. Produces ATP from ADP in the presence of a proton gradient across the membrane. The V-type beta chain is a regulatory subunit. In Thermus thermophilus (strain ATCC BAA-163 / DSM 7039 / HB27), this protein is V-type ATP synthase beta chain.